The sequence spans 214 residues: Thiamine-phosphate synthase (214 aa).

4-amino-2-methyl-5-(diphosphooxymethyl)pyrimidine contacts are provided by residues 37 to 41 and N73; that span reads QYREK. 2 residues coordinate Mg(2+): D74 and D93. 4-amino-2-methyl-5-(diphosphooxymethyl)pyrimidine is bound at residue S112. 2-[(2R,5Z)-2-carboxy-4-methylthiazol-5(2H)-ylidene]ethyl phosphate is bound at residue 139-141; it reads TIS. K142 is a binding site for 4-amino-2-methyl-5-(diphosphooxymethyl)pyrimidine. 2-[(2R,5Z)-2-carboxy-4-methylthiazol-5(2H)-ylidene]ethyl phosphate-binding positions include G171 and 191–192; that span reads IS.

This sequence belongs to the thiamine-phosphate synthase family. It depends on Mg(2+) as a cofactor.

It carries out the reaction 2-[(2R,5Z)-2-carboxy-4-methylthiazol-5(2H)-ylidene]ethyl phosphate + 4-amino-2-methyl-5-(diphosphooxymethyl)pyrimidine + 2 H(+) = thiamine phosphate + CO2 + diphosphate. The enzyme catalyses 2-(2-carboxy-4-methylthiazol-5-yl)ethyl phosphate + 4-amino-2-methyl-5-(diphosphooxymethyl)pyrimidine + 2 H(+) = thiamine phosphate + CO2 + diphosphate. It catalyses the reaction 4-methyl-5-(2-phosphooxyethyl)-thiazole + 4-amino-2-methyl-5-(diphosphooxymethyl)pyrimidine + H(+) = thiamine phosphate + diphosphate. It functions in the pathway cofactor biosynthesis; thiamine diphosphate biosynthesis; thiamine phosphate from 4-amino-2-methyl-5-diphosphomethylpyrimidine and 4-methyl-5-(2-phosphoethyl)-thiazole: step 1/1. Functionally, condenses 4-methyl-5-(beta-hydroxyethyl)thiazole monophosphate (THZ-P) and 2-methyl-4-amino-5-hydroxymethyl pyrimidine pyrophosphate (HMP-PP) to form thiamine monophosphate (TMP). This is Thiamine-phosphate synthase from Listeria monocytogenes serotype 4a (strain HCC23).